Reading from the N-terminus, the 503-residue chain is MEEFQGYLELDISRQHDLLYALLFREYIYALAHDHGLNRSILFENAGYDNKSSSIIVKRLITRMYQPNRLIFSSKDSIQNPFFGHNKNLYSQIISEGFAVIVEIPFSLRLVFSLERKEMAKSHNLRSIHSIFPFLEDKFIHLDYVLDVLIPYYIHLEILVQPLRYWVKDASSLHLLRFFLHEYCNSLITPKKHITFFSKGNPRLFLFLYNSHICEYEYIFLFLRNQSSHLRSTSSGIFFERIYFYVKIZHFFKVFFDNNFQCILWFFKDPFMHYVRYQGXFFLASKDTSLQMNKWKYYLVNFWQYHFYAWFQPGRININQLVKYSLDFLGYRSNARLNSSLVRSQMLENLFLINNAMNKFETIVPIISLIGSLYKANFCNTFGHPISKPTRTDSSDSDIIDRFLRICRNLSHYHSGSSKKKSLYQVKYILRLSCVKTLARKHKRTVRTFVKRLGSEFLQEFLTEEEVVLSLIFPRTYSTSRRLYRGHIWYLDITSIKHLXNYE.

It belongs to the intron maturase 2 family. MatK subfamily.

The protein localises to the plastid. It is found in the chloroplast. Functionally, usually encoded in the trnK tRNA gene intron. Probably assists in splicing its own and other chloroplast group II introns. This is Maturase K from Actinodium cunninghamii (Albany daisy).